Here is a 444-residue protein sequence, read N- to C-terminus: Nuclear envelope integral membrane protein 1 (444 aa).

An N-terminal signal peptide occupies residues 1-43 (MAGGMKVAVSPAVGPGPWGSGVGGGGTVRLLLILSGCLVYGTA). Asn125 carries an N-linked (GlcNAc...) asparagine glycan. A run of 5 helical transmembrane segments spans residues 161-181 (PKLF…DLLS), 186-206 (FYYS…IIFI), 216-236 (PIYV…QLVF), 245-265 (CYWQ…FAVC), and 289-309 (LCFM…IIIA). An a; required for its colocalization with lamins at the nuclear envelope region spans residues 186–297 (FYYSTGMTVG…GLCFMYSGIQ (112 aa)). The b; required for interaction with RAN-GTP stretch occupies residues 336–405 (PVPPRLLTEE…LTPNEVSVHE (70 aa)). The segment at 336–444 (PVPPRLLTEE…PAITQNNFLT (109 aa)) is required for nuclear localization. 3 positions are modified to phosphoserine: Ser368, Ser424, and Ser425.

The protein belongs to the NEMP family. In terms of assembly, homooligomer. Interacts with RAN-GTP. Interacts with EMD. Post-translationally, phosphorylation may regulate its interaction with RAN-GTP.

Its subcellular location is the nucleus inner membrane. The protein localises to the nucleus envelope. Together with EMD, contributes to nuclear envelope stiffness in germ cells. Required for female fertility. Essential for normal erythropoiesis. Required for efficient nuclear envelope opening and enucleation during the late stages of erythroblast maturation. The sequence is that of Nuclear envelope integral membrane protein 1 (NEMP1) from Homo sapiens (Human).